A 161-amino-acid chain; its full sequence is Transcriptional repressor NrdR (161 aa).

Residues 3 to 34 (CPYCGARDARVIDSRELNGGESIRRRRECIAC) fold into a zinc finger. One can recognise an ATP-cone domain in the interval 49 to 139 (LMVVKRDGRR…VYRRFADLED (91 aa)).

This sequence belongs to the NrdR family. Zn(2+) is required as a cofactor.

Its function is as follows. Negatively regulates transcription of bacterial ribonucleotide reductase nrd genes and operons by binding to NrdR-boxes. This is Transcriptional repressor NrdR from Thermomicrobium roseum (strain ATCC 27502 / DSM 5159 / P-2).